A 171-amino-acid polypeptide reads, in one-letter code: ATP synthase subunit b (171 aa).

The chain crosses the membrane as a helical span at residues 26-46 (INLVLVIALLVYFLKGFLGGI).

This sequence belongs to the ATPase B chain family. In terms of assembly, F-type ATPases have 2 components, F(1) - the catalytic core - and F(0) - the membrane proton channel. F(1) has five subunits: alpha(3), beta(3), gamma(1), delta(1), epsilon(1). F(0) has four main subunits: a(1), b(1), b'(1) and c(10-14). The alpha and beta chains form an alternating ring which encloses part of the gamma chain. F(1) is attached to F(0) by a central stalk formed by the gamma and epsilon chains, while a peripheral stalk is formed by the delta, b and b' chains.

The protein resides in the cellular thylakoid membrane. Its function is as follows. F(1)F(0) ATP synthase produces ATP from ADP in the presence of a proton or sodium gradient. F-type ATPases consist of two structural domains, F(1) containing the extramembraneous catalytic core and F(0) containing the membrane proton channel, linked together by a central stalk and a peripheral stalk. During catalysis, ATP synthesis in the catalytic domain of F(1) is coupled via a rotary mechanism of the central stalk subunits to proton translocation. Component of the F(0) channel, it forms part of the peripheral stalk, linking F(1) to F(0). In Synechococcus sp. (strain RCC307), this protein is ATP synthase subunit b.